Consider the following 302-residue polypeptide: Deubiquitinase OTUD6B (302 aa).

Residues 1-10 (MEGSEDEEAE) are compositionally biased toward acidic residues. Disordered regions lie at residues 1 to 52 (MEGS…KQLA) and 99 to 121 (EQQI…AALE). Positions 106 to 116 (RISKAQKRREK) are enriched in basic residues. The region spanning 156 to 293 (LEIKQIPSDG…GEHYNSVKLL (138 aa)) is the OTU domain. Residues 161–167 (IPSDGHC) are cys-loop. Residue Asp164 is part of the active site. Cys167 acts as the Nucleophile in catalysis. A variable-loop region spans residues 228–238 (IANTAAWGGQL). A his-loop region spans residues 276–286 (YMRHAYGLGEH). Residue His286 is part of the active site.

The catalysed reaction is Thiol-dependent hydrolysis of ester, thioester, amide, peptide and isopeptide bonds formed by the C-terminal Gly of ubiquitin (a 76-residue protein attached to proteins as an intracellular targeting signal).. In terms of biological role, deubiquitinating enzyme that may play a role in the ubiquitin-dependent regulation of different cellular processes. The polypeptide is Deubiquitinase OTUD6B (OTUD6B) (Gallus gallus (Chicken)).